An 843-amino-acid chain; its full sequence is Translation initiation factor IF-2 (843 aa).

2 disordered regions span residues 55-185 (AEAV…EDRD) and 209-228 (KVEE…QVKV). The segment covering 62-106 (PQEKPKKSAPKKEEKPKEEVKKEAEEKVAASKKEEEKPQEKKSVE) has biased composition (basic and acidic residues). Positions 114 to 128 (LKKRRGLVIVKKKRP) are enriched in basic residues. Basic and acidic residues predominate over residues 129 to 141 (KVEPKVEEKEAKQ). The segment covering 156–165 (LKRKPKKAKK) has biased composition (basic residues). 2 stretches are compositionally biased toward basic and acidic residues: residues 171–185 (KKNE…EDRD) and 209–221 (KVEE…EPQK). In terms of domain architecture, tr-type G spans 342-511 (ERPPVITIMG…LLQAEIMELK (170 aa)). Residues 351-358 (GHVDHGKT) are G1. 351–358 (GHVDHGKT) lines the GTP pocket. The G2 stretch occupies residues 376-380 (GITQH). Positions 397 to 400 (DTPG) are G3. Residues 397–401 (DTPGH) and 451–454 (NKID) contribute to the GTP site. Residues 451–454 (NKID) are G4. A G5 region spans residues 487–489 (SAK).

Belongs to the TRAFAC class translation factor GTPase superfamily. Classic translation factor GTPase family. IF-2 subfamily.

The protein resides in the cytoplasm. One of the essential components for the initiation of protein synthesis. Protects formylmethionyl-tRNA from spontaneous hydrolysis and promotes its binding to the 30S ribosomal subunits. Also involved in the hydrolysis of GTP during the formation of the 70S ribosomal complex. The polypeptide is Translation initiation factor IF-2 (Nitratiruptor sp. (strain SB155-2)).